A 386-amino-acid chain; its full sequence is Succinate--CoA ligase [ADP-forming] subunit beta (386 aa).

The ATP-grasp domain maps to 9–244 (KAVLRSYGVS…LDEEDSKEIE (236 aa)). ATP-binding positions include lysine 46, 53–55 (GRG), glutamate 99, cysteine 102, and glutamate 107. Residues asparagine 199 and aspartate 213 each contribute to the Mg(2+) site. Residues asparagine 264 and 321-323 (GIM) each bind substrate.

The protein belongs to the succinate/malate CoA ligase beta subunit family. As to quaternary structure, heterotetramer of two alpha and two beta subunits. Mg(2+) is required as a cofactor.

The enzyme catalyses succinate + ATP + CoA = succinyl-CoA + ADP + phosphate. It carries out the reaction GTP + succinate + CoA = succinyl-CoA + GDP + phosphate. Its pathway is carbohydrate metabolism; tricarboxylic acid cycle; succinate from succinyl-CoA (ligase route): step 1/1. Functionally, succinyl-CoA synthetase functions in the citric acid cycle (TCA), coupling the hydrolysis of succinyl-CoA to the synthesis of either ATP or GTP and thus represents the only step of substrate-level phosphorylation in the TCA. The beta subunit provides nucleotide specificity of the enzyme and binds the substrate succinate, while the binding sites for coenzyme A and phosphate are found in the alpha subunit. This is Succinate--CoA ligase [ADP-forming] subunit beta from Bacillus cereus (strain G9842).